The primary structure comprises 94 residues: Large ribosomal subunit protein uL23 (94 aa).

It belongs to the universal ribosomal protein uL23 family. In terms of assembly, part of the 50S ribosomal subunit. Contacts protein L29, and trigger factor when it is bound to the ribosome.

In terms of biological role, one of the early assembly proteins it binds 23S rRNA. One of the proteins that surrounds the polypeptide exit tunnel on the outside of the ribosome. Forms the main docking site for trigger factor binding to the ribosome. This chain is Large ribosomal subunit protein uL23, found in Phytoplasma australiense.